A 361-amino-acid chain; its full sequence is Biotin synthase (361 aa).

The tract at residues 14-38 is disordered; it reads AQRTPEPLPPTSQGLARPSHDVVRG. The 230-residue stretch at 86 to 315 folds into the Radical SAM core domain; that stretch reads HKGGPAALCG…ARDILVCGGR (230 aa). The [4Fe-4S] cluster site is built by Cys104, Cys108, and Cys111. Cys180 and Cys240 together coordinate [2Fe-2S] cluster.

It belongs to the radical SAM superfamily. Biotin synthase family. Homodimer. It depends on [4Fe-4S] cluster as a cofactor. [2Fe-2S] cluster is required as a cofactor.

The enzyme catalyses (4R,5S)-dethiobiotin + (sulfur carrier)-SH + 2 reduced [2Fe-2S]-[ferredoxin] + 2 S-adenosyl-L-methionine = (sulfur carrier)-H + biotin + 2 5'-deoxyadenosine + 2 L-methionine + 2 oxidized [2Fe-2S]-[ferredoxin]. Its pathway is cofactor biosynthesis; biotin biosynthesis; biotin from 7,8-diaminononanoate: step 2/2. Its function is as follows. Catalyzes the conversion of dethiobiotin (DTB) to biotin by the insertion of a sulfur atom into dethiobiotin via a radical-based mechanism. In Nitratidesulfovibrio vulgaris (strain DP4) (Desulfovibrio vulgaris), this protein is Biotin synthase.